A 250-amino-acid polypeptide reads, in one-letter code: UPF0259 membrane protein SG1383 (250 aa).

A run of 6 helical transmembrane segments spans residues 20 to 40, 86 to 106, 121 to 141, 146 to 166, 191 to 211, and 219 to 239; these read FASILLLALLTALISVVLGHA, AGTLAGLVGNVLLAGGLLTMI, IGLSAPLLPRLLLLIFLTTLL, LLLIIVPGILLAIAFSLAPVI, LLAPAVLFWLLAKAAVLLLAT, and LVAVVLLNGLSNLISALLLIY.

This sequence belongs to the UPF0259 family.

The protein resides in the cell inner membrane. This Sodalis glossinidius (strain morsitans) protein is UPF0259 membrane protein SG1383.